The chain runs to 453 residues: Protein IVY1 (453 aa).

Residues 1-16 (MPDNNTEQLQGSPSSD) are compositionally biased toward polar residues. A disordered region spans residues 1 to 20 (MPDNNTEQLQGSPSSDQRLR). 3 positions are modified to phosphoserine: Ser-59, Ser-84, and Ser-85. 2 coiled-coil regions span residues 102–122 (KRDV…SNAY) and 230–257 (IRNL…KHDF). 2 disordered regions span residues 316 to 340 (DGPY…EETG) and 353 to 453 (TSQP…SSNI). A Phosphoserine modification is found at Ser-335. Over residues 353-371 (TSQPSTSKTSLPKSKGSST) the composition is skewed to low complexity. Polar residues-rich tracts occupy residues 372 to 384 (VSTP…SSNK) and 404 to 429 (LMGT…TFKQ). Basic and acidic residues predominate over residues 431–442 (SIKEDNDNHSSD). Positions 443–453 (TDGMQDQSSNI) are enriched in polar residues.

Homomultimer. Interacts with YPT7 and VPS33.

The protein localises to the vacuole membrane. Functionally, may be required for vacuolar fusion. Overexpression leads to fragmentation of vacuoles, missorting of the vacuolar enzyme carboxypeptidase Y (CPY) to the exterior of the cell and accumulation of multivesicular bodies inside the cell. In Saccharomyces cerevisiae (strain ATCC 204508 / S288c) (Baker's yeast), this protein is Protein IVY1 (IVY1).